The primary structure comprises 213 residues: Hemolysin-3 homolog (213 aa).

The next 7 helical transmembrane spans lie at 11–31 (AITH…LIIF), 41–61 (IVSF…STLL), 75–95 (IIDH…FLLG), 103–123 (FTLL…KIFF), 127–147 (FILL…IAVK), 157–177 (GFSL…FYIW), and 185–205 (AIWH…VLFY).

This sequence belongs to the UPF0073 (Hly-III) family.

The protein localises to the cell membrane. In Bacillus subtilis (strain 168), this protein is Hemolysin-3 homolog (yplQ).